A 394-amino-acid chain; its full sequence is Probable ribosome production factor 1 (394 aa).

Disordered regions lie at residues 1–98 and 116–152; these read MIKI…PVLN and MKKE…EKDQ. Acidic residues-rich tracts occupy residues 15–33 and 59–88; these read QDSD…DLEV and ASED…DDDD. A compositionally biased stretch (basic residues) spans 116–134; it reads MKKEKHKKKMQERRARRKA. The Brix domain maps to 185–369; that stretch reads PKVLITFADN…LRSLQEGTFD (185 aa). The interval 347 to 364 is RNA-binding; the sequence is VKLRELGPRFTLKLRSLQ.

It is found in the nucleus. It localises to the nucleolus. Its function is as follows. May be required for ribosome biogenesis. This Drosophila melanogaster (Fruit fly) protein is Probable ribosome production factor 1.